Consider the following 309-residue polypeptide: Oxygen-dependent coproporphyrinogen-III oxidase (309 aa).

A substrate-binding site is contributed by Ser94. The a divalent metal cation site is built by His98 and His108. His108 acts as the Proton donor in catalysis. 110–112 (NVR) lines the substrate pocket. Positions 147 and 177 each coordinate a divalent metal cation. The segment at 242 to 277 (YVEFNLVWDRGTLFGLQTGGRTESILMSLPPLVRWE) is important for dimerization. 260-262 (GGR) contacts substrate.

It belongs to the aerobic coproporphyrinogen-III oxidase family. In terms of assembly, homodimer. Requires a divalent metal cation as cofactor.

Its subcellular location is the cytoplasm. The catalysed reaction is coproporphyrinogen III + O2 + 2 H(+) = protoporphyrinogen IX + 2 CO2 + 2 H2O. It participates in porphyrin-containing compound metabolism; protoporphyrin-IX biosynthesis; protoporphyrinogen-IX from coproporphyrinogen-III (O2 route): step 1/1. In terms of biological role, involved in the heme biosynthesis. Catalyzes the aerobic oxidative decarboxylation of propionate groups of rings A and B of coproporphyrinogen-III to yield the vinyl groups in protoporphyrinogen-IX. The sequence is that of Oxygen-dependent coproporphyrinogen-III oxidase from Yersinia pseudotuberculosis serotype O:1b (strain IP 31758).